A 92-amino-acid polypeptide reads, in one-letter code: CRISPR-associated endoribonuclease Cas2 1 (92 aa).

Aspartate 10 contributes to the Mg(2+) binding site.

This sequence belongs to the CRISPR-associated endoribonuclease Cas2 protein family. In terms of assembly, homodimer, forms a heterotetramer with a Cas1 homodimer. It depends on Mg(2+) as a cofactor.

CRISPR (clustered regularly interspaced short palindromic repeat), is an adaptive immune system that provides protection against mobile genetic elements (viruses, transposable elements and conjugative plasmids). CRISPR clusters contain sequences complementary to antecedent mobile elements and target invading nucleic acids. CRISPR clusters are transcribed and processed into CRISPR RNA (crRNA). Functions as a ssRNA-specific endoribonuclease. Involved in the integration of spacer DNA into the CRISPR cassette. The chain is CRISPR-associated endoribonuclease Cas2 1 from Thermodesulfovibrio yellowstonii (strain ATCC 51303 / DSM 11347 / YP87).